A 461-amino-acid chain; its full sequence is Bifunctional protein GlmU (461 aa).

The pyrophosphorylase stretch occupies residues 1 to 234 (MSLSVVILAA…EIEVEGANNR (234 aa)). UDP-N-acetyl-alpha-D-glucosamine is bound by residues 8-11 (LAAG), lysine 22, glutamine 77, 82-83 (GT), 104-106 (YGD), glycine 141, glutamate 159, asparagine 174, and asparagine 232. Aspartate 106 is a binding site for Mg(2+). Residue asparagine 232 coordinates Mg(2+). Positions 235-255 (VQLATLERAYQARIAEELMIA) are linker. The tract at residues 256 to 461 (GASLRDPARI…AGWQRPVKKS (206 aa)) is N-acetyltransferase. UDP-N-acetyl-alpha-D-glucosamine contacts are provided by arginine 338 and lysine 356. Residue histidine 368 is the Proton acceptor of the active site. UDP-N-acetyl-alpha-D-glucosamine-binding residues include tyrosine 371 and asparagine 382. Residues alanine 385, 391–392 (NY), serine 410, alanine 428, and arginine 445 contribute to the acetyl-CoA site.

It in the N-terminal section; belongs to the N-acetylglucosamine-1-phosphate uridyltransferase family. This sequence in the C-terminal section; belongs to the transferase hexapeptide repeat family. As to quaternary structure, homotrimer. Mg(2+) serves as cofactor.

The protein localises to the cytoplasm. It catalyses the reaction alpha-D-glucosamine 1-phosphate + acetyl-CoA = N-acetyl-alpha-D-glucosamine 1-phosphate + CoA + H(+). It carries out the reaction N-acetyl-alpha-D-glucosamine 1-phosphate + UTP + H(+) = UDP-N-acetyl-alpha-D-glucosamine + diphosphate. The protein operates within nucleotide-sugar biosynthesis; UDP-N-acetyl-alpha-D-glucosamine biosynthesis; N-acetyl-alpha-D-glucosamine 1-phosphate from alpha-D-glucosamine 6-phosphate (route II): step 2/2. It participates in nucleotide-sugar biosynthesis; UDP-N-acetyl-alpha-D-glucosamine biosynthesis; UDP-N-acetyl-alpha-D-glucosamine from N-acetyl-alpha-D-glucosamine 1-phosphate: step 1/1. It functions in the pathway bacterial outer membrane biogenesis; LPS lipid A biosynthesis. Its function is as follows. Catalyzes the last two sequential reactions in the de novo biosynthetic pathway for UDP-N-acetylglucosamine (UDP-GlcNAc). The C-terminal domain catalyzes the transfer of acetyl group from acetyl coenzyme A to glucosamine-1-phosphate (GlcN-1-P) to produce N-acetylglucosamine-1-phosphate (GlcNAc-1-P), which is converted into UDP-GlcNAc by the transfer of uridine 5-monophosphate (from uridine 5-triphosphate), a reaction catalyzed by the N-terminal domain. This is Bifunctional protein GlmU from Colwellia psychrerythraea (strain 34H / ATCC BAA-681) (Vibrio psychroerythus).